The chain runs to 82 residues: MSRKRPQPPVKPFKKKPNPLKAAKVTEIDYKDVALLRKFISDRGKIRSRRITGVTVQEQREISKAIKNAREMALLPYATSGR.

This sequence belongs to the bacterial ribosomal protein bS18 family. In terms of assembly, part of the 30S ribosomal subunit. Forms a tight heterodimer with protein bS6.

Its function is as follows. Binds as a heterodimer with protein bS6 to the central domain of the 16S rRNA, where it helps stabilize the platform of the 30S subunit. The chain is Small ribosomal subunit protein bS18 from Bifidobacterium adolescentis (strain ATCC 15703 / DSM 20083 / NCTC 11814 / E194a).